The primary structure comprises 318 residues: NADH-ubiquinone oxidoreductase chain 1 (318 aa).

The next 8 helical transmembrane spans lie at 3–23 (TTNILCLIIPILLAVAFLTLV), 69–89 (FMFTIAPTLALTLALTLWIPL), 100–120 (LGILFILAVSSLAVYSILWSG), 135–155 (AVAQTISYEVTLAIILLSLVL), 171–191 (HMWLVLPTWPLTMMWFTSTLA), 213–233 (VEYAAGPFALFFMAEYANIIL), 253–273 (ELHTINFITKTLILTTMFLWI), and 294–314 (LPLTLAMCMWHVSTSISFASI).

This sequence belongs to the complex I subunit 1 family.

Its subcellular location is the mitochondrion inner membrane. The enzyme catalyses a ubiquinone + NADH + 5 H(+)(in) = a ubiquinol + NAD(+) + 4 H(+)(out). In terms of biological role, core subunit of the mitochondrial membrane respiratory chain NADH dehydrogenase (Complex I) that is believed to belong to the minimal assembly required for catalysis. Complex I functions in the transfer of electrons from NADH to the respiratory chain. The immediate electron acceptor for the enzyme is believed to be ubiquinone. The polypeptide is NADH-ubiquinone oxidoreductase chain 1 (MT-ND1) (Choloepus didactylus (Southern two-toed sloth)).